The chain runs to 474 residues: MSLSQKILELLKNTETIKSTDIDVRSNELYPVLLSLASKEIISFTFKEQIIYKLTEEGESILKNGSYEFNLYNSIGDNGMELLEVDKYNLGKVNAFKNKWIKKVGDKVYKSADNVEDNVKNMLNNVTNKIYQKEEISLLKKRKLIYQAKEVVYFIKKGPLYGKDSDNITELISKMVISGEYKHLNFKPYNFNTKGNIQSQGALHPLMKVREEIRKIFLEMGFNEMTTNKFVESSFWNFDTLFQPQNHPSRDAHDTFFMKTPSTTSYIPIDYMKMIKKIHSVGDFDSDGHFSDWDIKEAEKNILRSHTTACSTRTMLEIAKGEFISAKLFSIDRVFRNEALDATHLAEFNQVEGLIVAKGLTLGNLMGYLKRFFEKLGITDIKFKPAYNPYTEPSMEVFGYHKGLKKWIEVGNSGMFRPEVLRPMGFDKDVRAIGFGLSLERPTMIKYGISNIRDLIGPKVDIEFIKKSEMCFFN.

Residues Met1–Glu150 are contains the major tRNA-Phe binding sites. L-phenylalanine contacts are provided by residues Thr308, Gln350 to Glu352, and Tyr390. Glu392 provides a ligand contact to Mg(2+). Phe416 is a binding site for L-phenylalanine.

Belongs to the class-II aminoacyl-tRNA synthetase family. Phe-tRNA synthetase alpha subunit type 2 subfamily. As to quaternary structure, tetramer of two alpha and two beta subunits. Mg(2+) is required as a cofactor.

It localises to the cytoplasm. It catalyses the reaction tRNA(Phe) + L-phenylalanine + ATP = L-phenylalanyl-tRNA(Phe) + AMP + diphosphate + H(+). The chain is Probable phenylalanine--tRNA ligase alpha subunit from Vairimorpha ceranae (strain BRL01) (Microsporidian parasite).